A 431-amino-acid polypeptide reads, in one-letter code: Enolase (431 aa).

Gln163 is a binding site for (2R)-2-phosphoglycerate. Glu205 functions as the Proton donor in the catalytic mechanism. 3 residues coordinate Mg(2+): Asp242, Glu288, and Asp315. The (2R)-2-phosphoglycerate site is built by Lys340, Arg369, Ser370, and Lys391. Catalysis depends on Lys340, which acts as the Proton acceptor.

Belongs to the enolase family. Mg(2+) is required as a cofactor.

It localises to the cytoplasm. The protein resides in the secreted. It is found in the cell surface. It carries out the reaction (2R)-2-phosphoglycerate = phosphoenolpyruvate + H2O. It participates in carbohydrate degradation; glycolysis; pyruvate from D-glyceraldehyde 3-phosphate: step 4/5. Functionally, catalyzes the reversible conversion of 2-phosphoglycerate (2-PG) into phosphoenolpyruvate (PEP). It is essential for the degradation of carbohydrates via glycolysis. The protein is Enolase of Bacillus cereus (strain AH187).